The chain runs to 719 residues: Potassium channel KOR2 (719 aa).

Residues 1–63 (MAEEYELNEI…VIHPNGRWYR (63 aa)) lie on the Cytoplasmic side of the membrane. A helical transmembrane segment spans residues 64–84 (IWANMMFLWSIYSTFFTPFEF). Topologically, residues 85–93 (SFFRGLPDQ) are extracellular. Residues 94 to 114 (LLDLECVQLVFLADVAVHFFL) form a helical membrane-spanning segment. The Cytoplasmic segment spans residues 115–137 (AYRDPHTYRMVHDKRHIALRYIK). A helical membrane pass occupies residues 138-158 (GSFALDVLGCFPWDAIYKVTG). The Extracellular segment spans residues 159 to 164 (RVEAVR). The chain crosses the membrane as a helical; Voltage-sensor span at residues 165-185 (WLVWVRLYRGRKVMAFFKRVE). At 186–199 (KDIRVSYLLTRIVK) the chain is on the cytoplasmic side. Residues 200–220 (LITVELYCTHTAACGFYYLAT) traverse the membrane as a helical segment. Residues 221–255 (TLPPAREGGTWIGSLSLGDARYINFREVDLLTRYV) are Extracellular-facing. An intramembrane region (pore-forming) is located at residues 256 to 275 (TSLYLAIVTMATVGYGDIHA). The Extracellular segment spans residues 276 to 285 (VNTREMAFTV). A helical transmembrane segment spans residues 286–306 (VYISFSIVLSAYLIGNMTALI). The Cytoplasmic segment spans residues 307-719 (VKGSRTERFR…LEQARTVATN (413 aa)). An a nucleoside 3',5'-cyclic phosphate-binding site is contributed by 383-503 (LFRGCSDDFL…SQILSNLLKG (121 aa)). 5 ANK repeats span residues 523-556 (KQES…DPSK), 560-589 (DGRT…NVNS), 593-622 (FGNS…ILNL), 624-653 (DAGG…SPNC), and 657-686 (DQRT…DIQA).

It belongs to the potassium channel family. Plant (TC 1.A.1.4) subfamily.

The protein resides in the membrane. Probable outward-rectifying potassium channel. This is Potassium channel KOR2 from Oryza sativa subsp. japonica (Rice).